A 160-amino-acid chain; its full sequence is Ribosomal RNA large subunit methyltransferase H (160 aa).

S-adenosyl-L-methionine is bound by residues Leu-76 and Gly-108.

It belongs to the RNA methyltransferase RlmH family. As to quaternary structure, homodimer.

Its subcellular location is the cytoplasm. It carries out the reaction pseudouridine(1915) in 23S rRNA + S-adenosyl-L-methionine = N(3)-methylpseudouridine(1915) in 23S rRNA + S-adenosyl-L-homocysteine + H(+). Specifically methylates the pseudouridine at position 1915 (m3Psi1915) in 23S rRNA. The chain is Ribosomal RNA large subunit methyltransferase H from Xanthobacter autotrophicus (strain ATCC BAA-1158 / Py2).